The primary structure comprises 394 residues: MQERHLFTSESVSEGHPDKIADQISDAILDAMLEQDPDSRVACETTVTTGLVLVVGEISTKAYVDIQSVVRGTIKKIGYTKESGFDPDSVGVLVALDEQSPDIAQGVDESLEARESDTDPLDKIGAGDQGMMFGFAIDETENYMPLPISLAHALMRKTDSLRHKGEISYLRPDAKAQVTVEYDDDDNPIRVDSVVVSVQHDPDVTLEEIRRDVEAKIIRTVIPEALMDDDTKIYVNPTGRFVLGGPQADSGLTGRKIIVDTYGGFARHGGGAFSGKDATKVDRSASYAARYIAKNVVAAGLAKRVEVQLAYAIGVAKPVSVSVNTFGTSAVSEDVIEQAIRENFDLRPAGIIKMLDLKRPIYEQTAAYGHFGRTDVDLPWEHLDKVQALLKYRD.

Histidine 16 provides a ligand contact to ATP. Mg(2+) is bound at residue aspartate 18. Residue glutamate 44 participates in K(+) binding. L-methionine is bound by residues glutamate 57 and glutamine 99. Positions 99-109 (QSPDIAQGVDE) are flexible loop. ATP is bound by residues 173 to 175 (DAK), 240 to 241 (RF), aspartate 249, 255 to 256 (RK), alanine 272, and lysine 276. Aspartate 249 serves as a coordination point for L-methionine. Residue lysine 280 participates in L-methionine binding.

Belongs to the AdoMet synthase family. In terms of assembly, homotetramer; dimer of dimers. Mg(2+) serves as cofactor. It depends on K(+) as a cofactor.

The protein resides in the cytoplasm. The enzyme catalyses L-methionine + ATP + H2O = S-adenosyl-L-methionine + phosphate + diphosphate. It participates in amino-acid biosynthesis; S-adenosyl-L-methionine biosynthesis; S-adenosyl-L-methionine from L-methionine: step 1/1. In terms of biological role, catalyzes the formation of S-adenosylmethionine (AdoMet) from methionine and ATP. The overall synthetic reaction is composed of two sequential steps, AdoMet formation and the subsequent tripolyphosphate hydrolysis which occurs prior to release of AdoMet from the enzyme. The chain is S-adenosylmethionine synthase from Lacticaseibacillus paracasei (strain ATCC 334 / BCRC 17002 / CCUG 31169 / CIP 107868 / KCTC 3260 / NRRL B-441) (Lactobacillus paracasei).